Here is a 309-residue protein sequence, read N- to C-terminus: N(5)-(carboxyethyl)ornithine synthase (309 aa).

3 residues coordinate pyruvate: arginine 15, lysine 71, and histidine 92. Position 171–176 (171–176 (GSGNVA)) interacts with NADP(+).

The protein belongs to the AlaDH/PNT family. CEOS subfamily. Homotetramer.

It catalyses the reaction N(5)-[1(S)-1-carboxyethyl]-L-ornithine + NADP(+) + H2O = L-ornithine + pyruvate + NADPH + H(+). Functionally, catalyzes the NADPH-dependent reductive condensation between pyruvic acid and the side chain amino group of L-ornithine to form N(5)-(L-1-carboxyethyl)-L-ornithine. To a lesser extent, can also use L-lysine as substrate (yielding N(6)-(L-1-carboxyethyl)-L-lysine). This chain is N(5)-(carboxyethyl)ornithine synthase (ceo), found in Lactococcus lactis subsp. lactis (strain IL1403) (Streptococcus lactis).